The following is a 194-amino-acid chain: Inner membrane-spanning protein YciB (194 aa).

5 consecutive transmembrane segments (helical) span residues 3-23 (LFIEYFPLLIFFIINSIAGIY), 47-67 (IPAKQWIIFGLIVVFGGLTIY), 76-96 (WKVTIINAFFAAALLVSNTFF), 119-139 (LNLAWALFFLFCSGLNYYIAF), and 149-169 (FKVFGLTGLMFLFSITSILFL).

Belongs to the YciB family.

It is found in the cell inner membrane. Functionally, plays a role in cell envelope biogenesis, maintenance of cell envelope integrity and membrane homeostasis. This Colwellia psychrerythraea (strain 34H / ATCC BAA-681) (Vibrio psychroerythus) protein is Inner membrane-spanning protein YciB.